Here is a 200-residue protein sequence, read N- to C-terminus: Adenylate kinase (200 aa).

ATP is bound at residue 10–15 (GAGKGT). The segment at 30–59 (STGDMLRAAVAAGTPVGLEAKAVMESGGLV) is NMP. AMP-binding positions include threonine 31, arginine 36, 57–59 (GLV), 85–88 (GFPR), and glutamine 92. Residues 126 to 142 (KRAAETLARGQAVRKDD) are LID. Arginine 127 provides a ligand contact to ATP. Residues arginine 139 and arginine 150 each contribute to the AMP site. Glutamine 178 contributes to the ATP binding site.

The protein belongs to the adenylate kinase family. In terms of assembly, monomer.

It is found in the cytoplasm. The enzyme catalyses AMP + ATP = 2 ADP. Its pathway is purine metabolism; AMP biosynthesis via salvage pathway; AMP from ADP: step 1/1. In terms of biological role, catalyzes the reversible transfer of the terminal phosphate group between ATP and AMP. Plays an important role in cellular energy homeostasis and in adenine nucleotide metabolism. The protein is Adenylate kinase of Methylobacterium radiotolerans (strain ATCC 27329 / DSM 1819 / JCM 2831 / NBRC 15690 / NCIMB 10815 / 0-1).